We begin with the raw amino-acid sequence, 662 residues long: Portal protein (662 aa).

Over residues 1–26 (MHRASANSPLNSVSGSMMWRNQSSGR) the composition is skewed to polar residues. Residues 1–35 (MHRASANSPLNSVSGSMMWRNQSSGRRPSKRLSDN) are disordered.

This sequence belongs to the herpesviridae portal protein family. In terms of assembly, homododecamerizes. Interacts with terminase subunits TRM1 and TRM3.

The protein localises to the virion. It localises to the host nucleus. In terms of biological role, forms a portal in the viral capsid through which viral DNA is translocated during DNA packaging. Assembles as a dodecamer at a single fivefold axe of the T=16 icosahedric capsid. Binds to the molecular motor that translocates the viral DNA, termed terminase. This Human herpesvirus 6B (strain Z29) (HHV-6 variant B) protein is Portal protein (U76).